The primary structure comprises 257 residues: MKLYLAAFLGAVATPGAFAHQIHGILLVNGTETPEWKYVRDVAWEGAYEPEKYPNTEFFKTPPQTDINNPNITCGRNAFDSASKTETADILAGSEVGFRVSWDGNGKYGVFWHPGPGQIYLSRAPNDDLEDYRGDGDWFKIATGAAVSNTEWLLWNKHDFNFTIPKTTPPGKYLMRIEQFMPSTVEYSQWYVNCAHVNIIGPGGGTPTGFARFPGTYTVDDPGIKVPLNQIVNSGELPQDQLRLLEYKPPGPALWTG.

A signal peptide spans 1 to 19; that stretch reads MKLYLAAFLGAVATPGAFA. His20 provides a ligand contact to Cu(2+). Asn29 and Asn71 each carry an N-linked (GlcNAc...) asparagine glycan. Cys74 and Cys194 are oxidised to a cystine. His113 is a Cu(2+) binding site. A glycan (N-linked (GlcNAc...) asparagine) is linked at Asn161. Gln189 is an O2 binding site. Position 191 (Tyr191) interacts with Cu(2+).

It belongs to the polysaccharide monooxygenase AA9 family. Cu(2+) serves as cofactor.

The protein localises to the secreted. It catalyses the reaction [(1-&gt;4)-beta-D-glucosyl]n+m + reduced acceptor + O2 = 4-dehydro-beta-D-glucosyl-[(1-&gt;4)-beta-D-glucosyl]n-1 + [(1-&gt;4)-beta-D-glucosyl]m + acceptor + H2O.. In terms of biological role, lytic polysaccharide monooxygenase (LPMO) that depolymerizes crystalline and amorphous polysaccharides via the oxidation of scissile alpha- or beta-(1-4)-glycosidic bonds, yielding C1 and C4 oxidation products. Catalysis by LPMOs requires the reduction of the active-site copper from Cu(II) to Cu(I) by a reducing agent and H(2)O(2) or O(2) as a cosubstrate. Shows no activity on wheat arabinoxylan, konjac glucomannan, acetylated spruce galactoglucomannan, or cellopentaose. The polypeptide is AA9 family lytic polysaccharide monooxygenase U (Thermothielavioides terrestris (strain ATCC 38088 / NRRL 8126) (Thielavia terrestris)).